Consider the following 354-residue polypeptide: Protein RecA (354 aa).

67–74 contributes to the ATP binding site; that stretch reads GPESSGKT. The disordered stretch occupies residues 331–354; that stretch reads GGANSSDSKTESDENIDLETGEVF. Residues 343 to 354 show a composition bias toward acidic residues; sequence DENIDLETGEVF.

The protein belongs to the RecA family.

The protein resides in the cytoplasm. Its function is as follows. Can catalyze the hydrolysis of ATP in the presence of single-stranded DNA, the ATP-dependent uptake of single-stranded DNA by duplex DNA, and the ATP-dependent hybridization of homologous single-stranded DNAs. It interacts with LexA causing its activation and leading to its autocatalytic cleavage. In Shewanella frigidimarina (strain NCIMB 400), this protein is Protein RecA.